The primary structure comprises 374 residues: Glutamate 5-kinase (374 aa).

Lys-16 is a binding site for ATP. The substrate site is built by Ser-56, Asp-143, and Asn-155. Residue 175-176 coordinates ATP; the sequence is TD. The PUA domain occupies 282–360; sequence RGRVVLDAGA…SEIEAVLGYV (79 aa).

The protein belongs to the glutamate 5-kinase family.

Its subcellular location is the cytoplasm. It carries out the reaction L-glutamate + ATP = L-glutamyl 5-phosphate + ADP. It functions in the pathway amino-acid biosynthesis; L-proline biosynthesis; L-glutamate 5-semialdehyde from L-glutamate: step 1/2. In terms of biological role, catalyzes the transfer of a phosphate group to glutamate to form L-glutamate 5-phosphate. This is Glutamate 5-kinase from Ralstonia nicotianae (strain ATCC BAA-1114 / GMI1000) (Ralstonia solanacearum).